We begin with the raw amino-acid sequence, 189 residues long: MKKYSKKDRQMKLQVAIEENPFITDEQLAEKFGVSVQTIRLDRVALSIPELRERIKHVASVNYADAVKSLPIDEVIGEIIDIQLSKSAISIFDVRSEHVFKRNKIARGHHLFAQANSLATAVIPNEIALTTQATVRFVRSVNEGERIIAKAKVRPATDNRAITIVDVKSYVGDEIVLKGKFEMYHATQK.

The protein belongs to the FapR family.

Functionally, transcriptional factor involved in regulation of membrane lipid biosynthesis by repressing genes involved in fatty acid and phospholipid metabolism. In Listeria monocytogenes serotype 4b (strain CLIP80459), this protein is Transcription factor FapR.